Here is a 310-residue protein sequence, read N- to C-terminus: Terpene synthase 6 (310 aa).

The DDxx(x)D/E motif signature appears at 93–98 (DDFYFE). The short motif at 222–230 (NDCYSFNKE) is the NDxxSxxxD/E motif element.

This sequence belongs to the terpene synthase family.

It carries out the reaction (2E,6E)-farnesyl diphosphate = (E)-beta-farnesene + diphosphate. The enzyme catalyses (2E,6E)-farnesyl diphosphate = (1S,2S,4R)-beta-elemene + diphosphate. It catalyses the reaction (2E,6E)-farnesyl diphosphate = (3E,6E)-alpha-farnesene + diphosphate. Functionally, terpene synthase that converts its substrate farnesyl diphosphate (FPP) into the sesquiterpenes beta-elemene, (E)-beta-farnesene and (E,E)-alpha-farnesene. The protein is Terpene synthase 6 of Dictyostelium purpureum (Slime mold).